A 179-amino-acid polypeptide reads, in one-letter code: Probable WRKY transcription factor 24 (179 aa).

Residues 92–157 constitute a DNA-binding region (WRKY); it reads SDDDVLDDGY…YEGVHNHPCE (66 aa).

Belongs to the WRKY group II-c family.

The protein localises to the nucleus. Transcription factor. Interacts specifically with the W box (5'-(T)TGAC[CT]-3'), a frequently occurring elicitor-responsive cis-acting element. This is Probable WRKY transcription factor 24 (WRKY24) from Arabidopsis thaliana (Mouse-ear cress).